A 1043-amino-acid polypeptide reads, in one-letter code: Beta-klotho (1043 aa).

The Extracellular segment spans residues 1 to 994; the sequence is MKTGCAAGSP…ICSFLVEKKP (994 aa). Glycosyl hydrolase-1 stretches follow at residues 77–506 and 515–965; these read LYDT…DNGF and MKGR…SSGL. N-linked (GlcNAc...) asparagine glycans are attached at residues asparagine 84, asparagine 122, asparagine 161, asparagine 211, asparagine 262, asparagine 308, asparagine 389, asparagine 552, asparagine 609, asparagine 700, asparagine 704, and asparagine 837. A helical membrane pass occupies residues 995–1015; that stretch reads LIFFGCCFISTLAVLLSITVF. Residues 1016 to 1043 lie on the Cytoplasmic side of the membrane; that stretch reads HHQKRRKFQKARNLQNIPLKKGHSRVFS.

Belongs to the glycosyl hydrolase 1 family. Klotho subfamily. In terms of assembly, interacts with FGF19; this interaction is direct. Interacts (via C-terminus) with FGF21; this interaction is direct. Interacts with FGFR1 and FGFR4. In terms of tissue distribution, present in liver, muscle and white adipose tissue, but not in kidney (at protein level). Expressed in liver and pancreas, and at lower levels in skin, stomach, skeletal muscle, small intestine and lung.

Its subcellular location is the cell membrane. Its function is as follows. Contributes to the transcriptional repression of cholesterol 7-alpha-hydroxylase (CYP7A1), the rate-limiting enzyme in bile acid synthesis. Probably inactive as a glycosidase. Increases the ability of FGFR1 and FGFR4 to bind FGF21. In Mus musculus (Mouse), this protein is Beta-klotho (Klb).